The following is a 424-amino-acid chain: Adenylosuccinate synthetase (424 aa).

GTP-binding positions include 11-17 (GDEGKGK) and 39-41 (GHT). Asp-12 acts as the Proton acceptor in catalysis. Mg(2+) contacts are provided by Asp-12 and Gly-39. Residues 12-15 (DEGK), 37-40 (NAGH), Thr-127, Arg-141, Gln-223, Thr-238, and Arg-302 each bind IMP. The Proton donor role is filled by His-40. Position 298–304 (298–304 (TTTGRGR)) interacts with substrate. Residues Arg-304, 330–332 (KLD), and 412–414 (SVG) contribute to the GTP site.

Belongs to the adenylosuccinate synthetase family. Homodimer. Mg(2+) serves as cofactor.

It is found in the cytoplasm. The enzyme catalyses IMP + L-aspartate + GTP = N(6)-(1,2-dicarboxyethyl)-AMP + GDP + phosphate + 2 H(+). It functions in the pathway purine metabolism; AMP biosynthesis via de novo pathway; AMP from IMP: step 1/2. In terms of biological role, plays an important role in the de novo pathway of purine nucleotide biosynthesis. Catalyzes the first committed step in the biosynthesis of AMP from IMP. The protein is Adenylosuccinate synthetase of Methanosarcina barkeri (strain Fusaro / DSM 804).